We begin with the raw amino-acid sequence, 322 residues long: Cytochrome f (322 aa).

The signal sequence occupies residues M1–A37. Heme contacts are provided by Y38, C58, C61, and H62. A helical transmembrane segment spans residues V285 to L307.

Belongs to the cytochrome f family. As to quaternary structure, the 4 large subunits of the cytochrome b6-f complex are cytochrome b6, subunit IV (17 kDa polypeptide, petD), cytochrome f and the Rieske protein, while the 4 small subunits are PetG, PetL, PetM and PetN. The complex functions as a dimer. It depends on heme as a cofactor.

It is found in the plastid. The protein resides in the chloroplast thylakoid membrane. Functionally, component of the cytochrome b6-f complex, which mediates electron transfer between photosystem II (PSII) and photosystem I (PSI), cyclic electron flow around PSI, and state transitions. This chain is Cytochrome f (petA), found in Anthoceros angustus (Hornwort).